The chain runs to 375 residues: MNYQMITTDDALASLCEAVRAFPAIALDTEFVRTRTYYPQLGLIQLFDGEHLALIDPLGITDWSPLKAILRDPSITKFLHAGSEDLEVFLNVFGELPQPLIDTQILAAFCGRPMSWGFASMVEEYSGVTLDKSESRTDWLARPLTERQCEYAAADVWYLLPITAKLMVETEASGWLPAALDECRLMQMRRQEVVAPEDAWRDITNAWQLRTRQLACLQLLADWRLRKARERDLAVNFVVREEHLWSVARYMPGSLGELDSLGLSGSEIRFHGKTLLALVEKAQTLPEDALPQPMLNLMDMPGYRKAFKAIKSLITDVSETHKISAELLASRRQINQLLNWHWKLKPQNNLPELISGWRGELMAEALHNLLQEYPQ.

One can recognise a 3'-5' exonuclease domain in the interval 3 to 169 (YQMITTDDAL…LPITAKLMVE (167 aa)). The HRDC domain occupies 210-289 (RTRQLACLQL…EKAQTLPEDA (80 aa)).

The protein belongs to the RNase D family. The cofactor is a divalent metal cation.

The protein resides in the cytoplasm. The enzyme catalyses Exonucleolytic cleavage that removes extra residues from the 3'-terminus of tRNA to produce 5'-mononucleotides.. In terms of biological role, exonuclease involved in the 3' processing of various precursor tRNAs. Initiates hydrolysis at the 3'-terminus of an RNA molecule and releases 5'-mononucleotides. This is Ribonuclease D from Escherichia coli (strain K12).